The sequence spans 499 residues: Putative ribose/galactose/methyl galactoside import ATP-binding protein 3 (499 aa).

2 consecutive ABC transporter domains span residues 8-243 (LRMR…VGRE) and 253-497 (SKIG…TGEE). 40–47 (GENGAGKS) lines the ATP pocket.

It belongs to the ABC transporter superfamily. Carbohydrate importer 2 (CUT2) (TC 3.A.1.2) family.

The protein localises to the cell inner membrane. It carries out the reaction D-ribose(out) + ATP + H2O = D-ribose(in) + ADP + phosphate + H(+). It catalyses the reaction D-galactose(out) + ATP + H2O = D-galactose(in) + ADP + phosphate + H(+). Part of an ABC transporter complex involved in carbohydrate import. Could be involved in ribose, galactose and/or methyl galactoside import. Responsible for energy coupling to the transport system. This chain is Putative ribose/galactose/methyl galactoside import ATP-binding protein 3, found in Agrobacterium fabrum (strain C58 / ATCC 33970) (Agrobacterium tumefaciens (strain C58)).